A 590-amino-acid polypeptide reads, in one-letter code: L-gulonolactone oxidase 5 (590 aa).

A signal peptide spans 1 to 31 (MAFGYSPSYCSFWRTLLGLYCLFTLVHTVIS). The region spanning 60-242 (STCRAANVAY…SQVTFELQPM (183 aa)) is the FAD-binding PCMH-type domain.

Belongs to the oxygen-dependent FAD-linked oxidoreductase family. The cofactor is FAD.

The enzyme catalyses L-gulono-1,4-lactone + O2 = L-ascorbate + H2O2 + H(+). It functions in the pathway cofactor biosynthesis; L-ascorbate biosynthesis. Its function is as follows. Catalyzes the oxidation of L-gulono-1,4-lactone to ascorbic acid. L-gulono-1,4-lactone is oxidized to hydrogen peroxide and L-xylo-hexulonolactone which spontaneously isomerizes to L-ascorbate. This chain is L-gulonolactone oxidase 5, found in Arabidopsis thaliana (Mouse-ear cress).